The primary structure comprises 315 residues: Cysteine proteinase 2 (315 aa).

The first 13 residues, M1–A13, serve as a signal peptide directing secretion. A propeptide spans I14 to Q93 (activation peptide). Intrachain disulfides connect C115/C161 and C152/C193. Residue C118 is part of the active site. Residues H259 and N279 contribute to the active site.

It belongs to the peptidase C1 family. In terms of assembly, interacts with cysteine protease inhibitor ICP1. Interacts with cysteine protease inhibitor ICP2.

It is found in the cell membrane. The protein localises to the cytoplasmic vesicle. It localises to the phagosome. The protein resides in the secreted. It catalyses the reaction Hydrolysis of proteins, including basement membrane collagen and azocasein. Preferential cleavage: Arg-Arg-|-Xaa in small molecule substrates including Z-Arg-Arg-|-NHMec.. With respect to regulation, inhibited by cysteine protease inhibitors ICP1 and ICP2. Inhibited by leupeptin and such inhibitors of cysteine proteinases as L-transepoxysuccinyl-L-leucylamido-(4-guanidino)butane, peptidyldiazomethanes, iodoacetic acid and chicken cystatin. Its function is as follows. Cysteine protease which degrades matrix proteins such as collagen, laminin and fibronectin and thus is involved in the destruction of human tissue. Can abolish adhesion. May play an important role in pathogenicity. The protein is Cysteine proteinase 2 of Entamoeba histolytica (strain ATCC 30459 / HM-1:IMSS / ABRM).